We begin with the raw amino-acid sequence, 271 residues long: MLNSPGTRRPVKEAQKYGEDSQKSHSPGTPGPRSSVTTLSASALSDSSSPDTPPRRGPGRPSTPARAPATSAPMMYSRRGVRRTARPAGADTRSSANQLPQPSGACANADSAPPADVSACLRRRSHGDRCVPRSRRRPRPRPRASTAFFQEEGPCGACPGALRPQAGASFRELRGLPPPRPREREQSPPLGAAPSSALSHQGWKNTRCATRGLVNTLVNTGHFLYLQPPAPLIMPYLDDAEVPGNRRSHPSLSFSWLSKALYHVTFLLRIL.

A disordered region spans residues 1 to 202; that stretch reads MLNSPGTRRP…APSSALSHQG (202 aa). The segment covering 10 to 23 has biased composition (basic and acidic residues); that stretch reads PVKEAQKYGEDSQK. Low complexity-rich tracts occupy residues 33 to 50 and 59 to 73; these read RSSV…SSSP and GRPS…TSAP. Positions 92–101 are enriched in polar residues; sequence TRSSANQLPQ. Positions 121-142 are enriched in basic residues; sequence LRRRSHGDRCVPRSRRRPRPRP.

This is an uncharacterized protein from Homo sapiens (Human).